The chain runs to 1365 residues: Serine-aspartate repeat-containing protein D (1365 aa).

The first 35 residues, Met1–Ile35, serve as a signal peptide directing secretion. A YSIRK-G/S signaling motif motif is present at residues Phe23–Ser34. Residues Leu36–Glu568 form a ligand binding A region region. The disordered stretch occupies residues Glu54 to Ser185. Composition is skewed to polar residues over residues Glu62–Gln71 and Glu94–Lys109. Positions Lys130–Asn145 are enriched in basic and acidic residues. Polar residues-rich tracts occupy residues Thr146 to Ala155 and Asn163 to Asn173. A compositionally biased stretch (basic and acidic residues) spans Glu174–Thr183. 5 consecutive CNA-B domains span residues Val569–Pro680, Lys681–Pro791, Lys792–Pro901, Thr902–Pro1012, and Lys1013–Thr1123. 3 disordered regions span residues Glu857–Gly884, Tyr972–Thr991, and Glu1078–Ala1341. Composition is skewed to polar residues over residues Ser860 to Ser869 and Tyr972 to Asn981. 2 stretches are compositionally biased toward acidic residues: residues Thr1091–Glu1101 and Tyr1118–Ser1304. The short motif at Leu1328–Gly1332 is the LPXTG sorting signal element. Thr1331 is subject to Pentaglycyl murein peptidoglycan amidated threonine. Positions Gly1332–Lys1365 are cleaved as a propeptide — removed by sortase.

It belongs to the serine-aspartate repeat-containing protein (SDr) family. As to quaternary structure, interacts with host DSG1; this interaction increases S.aureus adherence to keratinocytes.

The protein resides in the secreted. It is found in the cell wall. Functionally, cell surface-associated calcium-binding protein which plays an important role in adhesion and pathogenesis. Mediates interactions with components of the extracellular matrix such as host DSG1 to promote bacterial adhesion to host cells. Contributes to the resistance to killing by innate immune components such as neutrophils present in blood and thus attenuates bacterial clearance. The protein is Serine-aspartate repeat-containing protein D (sdrD) of Staphylococcus aureus (strain MSSA476).